The primary structure comprises 131 residues: Universal stress protein C (131 aa).

This sequence belongs to the universal stress protein A family.

The protein resides in the cytoplasm. Functionally, required for resistance to DNA-damaging agents. This Salmonella typhi protein is Universal stress protein C (uspC).